A 338-amino-acid polypeptide reads, in one-letter code: Lipoate-protein ligase A (338 aa).

The BPL/LPL catalytic domain maps to 29 to 216 (PATQRVLFLW…AFFAHYGERV (188 aa)). Residues R71, 76-79 (GAVF), and K134 each bind ATP. K134 lines the (R)-lipoate pocket.

Belongs to the LplA family. In terms of assembly, monomer.

The protein resides in the cytoplasm. It carries out the reaction L-lysyl-[lipoyl-carrier protein] + (R)-lipoate + ATP = N(6)-[(R)-lipoyl]-L-lysyl-[lipoyl-carrier protein] + AMP + diphosphate + H(+). Its pathway is protein modification; protein lipoylation via exogenous pathway; protein N(6)-(lipoyl)lysine from lipoate: step 1/2. It functions in the pathway protein modification; protein lipoylation via exogenous pathway; protein N(6)-(lipoyl)lysine from lipoate: step 2/2. In terms of biological role, catalyzes both the ATP-dependent activation of exogenously supplied lipoate to lipoyl-AMP and the transfer of the activated lipoyl onto the lipoyl domains of lipoate-dependent enzymes. The sequence is that of Lipoate-protein ligase A from Escherichia coli O9:H4 (strain HS).